The primary structure comprises 318 residues: CRISPR-associated endonuclease Cas1 1 (318 aa).

3 residues coordinate Mn(2+): Glu-160, His-225, and Glu-240.

This sequence belongs to the CRISPR-associated endonuclease Cas1 family. As to quaternary structure, homodimer, forms a heterotetramer with a Cas2 homodimer. Mg(2+) is required as a cofactor. Mn(2+) serves as cofactor.

In terms of biological role, CRISPR (clustered regularly interspaced short palindromic repeat), is an adaptive immune system that provides protection against mobile genetic elements (viruses, transposable elements and conjugative plasmids). CRISPR clusters contain spacers, sequences complementary to antecedent mobile elements, and target invading nucleic acids. CRISPR clusters are transcribed and processed into CRISPR RNA (crRNA). Acts as a dsDNA endonuclease. Involved in the integration of spacer DNA into the CRISPR cassette. This Thermodesulfovibrio yellowstonii (strain ATCC 51303 / DSM 11347 / YP87) protein is CRISPR-associated endonuclease Cas1 1.